The sequence spans 520 residues: Bifunctional purine biosynthesis protein PurH (520 aa).

Residues 1–147 (MAKIGRALIS…KNNRDVTVVV (147 aa)) form the MGS-like domain.

It belongs to the PurH family.

It catalyses the reaction (6R)-10-formyltetrahydrofolate + 5-amino-1-(5-phospho-beta-D-ribosyl)imidazole-4-carboxamide = 5-formamido-1-(5-phospho-D-ribosyl)imidazole-4-carboxamide + (6S)-5,6,7,8-tetrahydrofolate. It carries out the reaction IMP + H2O = 5-formamido-1-(5-phospho-D-ribosyl)imidazole-4-carboxamide. It participates in purine metabolism; IMP biosynthesis via de novo pathway; 5-formamido-1-(5-phospho-D-ribosyl)imidazole-4-carboxamide from 5-amino-1-(5-phospho-D-ribosyl)imidazole-4-carboxamide (10-formyl THF route): step 1/1. It functions in the pathway purine metabolism; IMP biosynthesis via de novo pathway; IMP from 5-formamido-1-(5-phospho-D-ribosyl)imidazole-4-carboxamide: step 1/1. This is Bifunctional purine biosynthesis protein PurH from Geobacter sp. (strain M21).